The following is a 685-amino-acid chain: ABC transporter G family member 26 (685 aa).

The ABC transporter domain occupies 65–329 (LKFEDVEYKV…FSSLRILPEI (265 aa)). 124 to 131 (GPSGSGKT) is an ATP binding site. In terms of domain architecture, ABC transmembrane type-2 spans 414 to 623 (DQFLILSRRT…GFRLLLKVQY (210 aa)). 6 helical membrane-spanning segments follow: residues 432-452 (FDKL…LLWW), 468-488 (LMFY…VYVF), 518-538 (MVAH…MAEF), 542-562 (IPCF…SQGA), 576-596 (AGMI…YYVQ), and 648-668 (TINL…AFGY).

Belongs to the ABC transporter superfamily. ABCG family. Eye pigment precursor importer (TC 3.A.1.204) subfamily. Homo- or heterodimer. In terms of tissue distribution, mostly expressed in flowers, especially in tapetum within anthers.

The protein localises to the cell membrane. The protein resides in the endoplasmic reticulum membrane. Mediates the transport of sporopollenin precursors (e.g. polyketides) across the tapetum plasma membrane into the anther locule for polymerization on developing microspore walls, thus being required for male fertility and pollen exine formation and patterning prior to tapetum programmed cell death. This is ABC transporter G family member 26 from Arabidopsis thaliana (Mouse-ear cress).